The sequence spans 360 residues: DNA replication and repair protein RecF (360 aa).

33–40 contacts ATP; that stretch reads GENGSGKT.

Belongs to the RecF family.

The protein localises to the cytoplasm. In terms of biological role, the RecF protein is involved in DNA metabolism; it is required for DNA replication and normal SOS inducibility. RecF binds preferentially to single-stranded, linear DNA. It also seems to bind ATP. In Rickettsia typhi (strain ATCC VR-144 / Wilmington), this protein is DNA replication and repair protein RecF.